Reading from the N-terminus, the 378-residue chain is Erythronate-4-phosphate dehydrogenase (378 aa).

Substrate contacts are provided by serine 45 and threonine 66. Positions 146 and 175 each coordinate NAD(+). The active site involves arginine 208. Aspartate 232 serves as a coordination point for NAD(+). The active site involves glutamate 237. Histidine 254 functions as the Proton donor in the catalytic mechanism. Position 257 (glycine 257) interacts with NAD(+). Substrate is bound at residue tyrosine 258.

This sequence belongs to the D-isomer specific 2-hydroxyacid dehydrogenase family. PdxB subfamily. In terms of assembly, homodimer.

The protein resides in the cytoplasm. The enzyme catalyses 4-phospho-D-erythronate + NAD(+) = (R)-3-hydroxy-2-oxo-4-phosphooxybutanoate + NADH + H(+). Its pathway is cofactor biosynthesis; pyridoxine 5'-phosphate biosynthesis; pyridoxine 5'-phosphate from D-erythrose 4-phosphate: step 2/5. In terms of biological role, catalyzes the oxidation of erythronate-4-phosphate to 3-hydroxy-2-oxo-4-phosphonooxybutanoate. The sequence is that of Erythronate-4-phosphate dehydrogenase from Escherichia coli O6:K15:H31 (strain 536 / UPEC).